A 176-amino-acid polypeptide reads, in one-letter code: CDP-archaeol synthase (176 aa).

5 helical membrane-spanning segments follow: residues 12-32 (FIYWFLKYYLSPMIANASPVL), 60-80 (GFYVGVLMGFLTSIGIGIILC), 85-105 (ILIGLGSSIFALIGDLLGSFI), 118-138 (PIIDQLDFALMATLYYYFLGI), and 141-161 (FISYPLYILYSLIIILALHII).

Belongs to the CDP-archaeol synthase family. Mg(2+) serves as cofactor.

It localises to the cell membrane. It catalyses the reaction 2,3-bis-O-(geranylgeranyl)-sn-glycerol 1-phosphate + CTP + H(+) = CDP-2,3-bis-O-(geranylgeranyl)-sn-glycerol + diphosphate. Its pathway is membrane lipid metabolism; glycerophospholipid metabolism. In terms of biological role, catalyzes the formation of CDP-2,3-bis-(O-geranylgeranyl)-sn-glycerol (CDP-archaeol) from 2,3-bis-(O-geranylgeranyl)-sn-glycerol 1-phosphate (DGGGP) and CTP. This reaction is the third ether-bond-formation step in the biosynthesis of archaeal membrane lipids. The protein is CDP-archaeol synthase of Staphylothermus marinus (strain ATCC 43588 / DSM 3639 / JCM 9404 / F1).